The primary structure comprises 182 residues: Ribosome maturation factor RimM (182 aa).

The PRC barrel domain maps to 101-174 (QDEYFIHQLY…QIVVRLLPGL (74 aa)).

Belongs to the RimM family. Binds ribosomal protein uS19.

The protein resides in the cytoplasm. Functionally, an accessory protein needed during the final step in the assembly of 30S ribosomal subunit, possibly for assembly of the head region. Essential for efficient processing of 16S rRNA. May be needed both before and after RbfA during the maturation of 16S rRNA. It has affinity for free ribosomal 30S subunits but not for 70S ribosomes. This chain is Ribosome maturation factor RimM, found in Roseiflexus sp. (strain RS-1).